The primary structure comprises 750 residues: ABC transporter D family member 3 (750 aa).

The span at 1-14 (MKKNNVNNITETLN) shows a compositional bias: polar residues. Residues 1–32 (MKKNNVNNITETLNSSSSSSSSSGSSSDEEVK) are disordered. A compositionally biased stretch (low complexity) spans 15 to 26 (SSSSSSSSSGSS). Transmembrane regions (helical) follow at residues 63 to 83 (IVIILYEKPVIPLLLFLLLFG), 123 to 143 (FAIGGSALFDAIIKFIVSIMA), 188 to 208 (FTTLLSSIVSQCITGPMVVVY), and 215 to 235 (TTIDWYAPLIVYGYFFLGYFI). The ABC transmembrane type-1 domain occupies 74-362 (PLLLFLLLFG…EQAKQQFEAL (289 aa)). Positions 334 to 370 (ALLKRSNKNIKNEELLVEEEQAKQQFEALLKNKKRVI) form a coiled coil. The helical transmembrane segment at 382-402 (MFTFFSPLINYFIISIPVFFL) threads the bilayer. One can recognise an ABC transporter domain in the interval 507–737 (ITLDDVTYFT…SNNINTINID (231 aa)). An ATP-binding site is contributed by 540–547 (GPSGSGKS).

It belongs to the ABC transporter superfamily. ABCD family. Peroxisomal fatty acyl CoA transporter (TC 3.A.1.203) subfamily.

The protein resides in the membrane. This Dictyostelium discoideum (Social amoeba) protein is ABC transporter D family member 3 (abcD3).